The chain runs to 415 residues: Probable glucuronosyltransferase Os03g0287800 (415 aa).

Over Met1–Lys25 the chain is Cytoplasmic. A helical; Signal-anchor for type II membrane protein membrane pass occupies residues Ala26–Ala43. Residues Pro44 to Cys415 are Lumenal-facing. 4 N-linked (GlcNAc...) asparagine glycosylation sites follow: Asn78, Asn165, Asn257, and Asn287.

The protein belongs to the glycosyltransferase 43 family.

The protein resides in the golgi apparatus membrane. Functionally, involved in the synthesis of glucuronoxylan hemicellulose in secondary cell walls. This is Probable glucuronosyltransferase Os03g0287800 from Oryza sativa subsp. japonica (Rice).